Reading from the N-terminus, the 112-residue chain is Small ribosomal subunit protein bS6 (112 aa).

This sequence belongs to the bacterial ribosomal protein bS6 family.

In terms of biological role, binds together with bS18 to 16S ribosomal RNA. This chain is Small ribosomal subunit protein bS6, found in Christiangramia forsetii (strain DSM 17595 / CGMCC 1.15422 / KT0803) (Gramella forsetii).